The sequence spans 115 residues: Large ribosomal subunit protein bL20 (115 aa).

Belongs to the bacterial ribosomal protein bL20 family.

Functionally, binds directly to 23S ribosomal RNA and is necessary for the in vitro assembly process of the 50S ribosomal subunit. It is not involved in the protein synthesizing functions of that subunit. This Chlorobium luteolum (strain DSM 273 / BCRC 81028 / 2530) (Pelodictyon luteolum) protein is Large ribosomal subunit protein bL20.